Here is a 335-residue protein sequence, read N- to C-terminus: N-acetyl-gamma-glutamyl-phosphate reductase (335 aa).

Residue Cys156 is part of the active site.

Belongs to the NAGSA dehydrogenase family. Type 1 subfamily.

The protein resides in the cytoplasm. The catalysed reaction is N-acetyl-L-glutamate 5-semialdehyde + phosphate + NADP(+) = N-acetyl-L-glutamyl 5-phosphate + NADPH + H(+). It functions in the pathway amino-acid biosynthesis; L-arginine biosynthesis; N(2)-acetyl-L-ornithine from L-glutamate: step 3/4. Functionally, catalyzes the NADPH-dependent reduction of N-acetyl-5-glutamyl phosphate to yield N-acetyl-L-glutamate 5-semialdehyde. In Aeromonas salmonicida (strain A449), this protein is N-acetyl-gamma-glutamyl-phosphate reductase.